The chain runs to 545 residues: ATP synthase subunit alpha (545 aa).

173–180 provides a ligand contact to ATP; the sequence is GDRQTGKT.

The protein belongs to the ATPase alpha/beta chains family. In terms of assembly, F-type ATPases have 2 components, CF(1) - the catalytic core - and CF(0) - the membrane proton channel. CF(1) has five subunits: alpha(3), beta(3), gamma(1), delta(1), epsilon(1). CF(0) has three main subunits: a(1), b(2) and c(9-12). The alpha and beta chains form an alternating ring which encloses part of the gamma chain. CF(1) is attached to CF(0) by a central stalk formed by the gamma and epsilon chains, while a peripheral stalk is formed by the delta and b chains.

The protein resides in the cell membrane. It catalyses the reaction ATP + H2O + 4 H(+)(in) = ADP + phosphate + 5 H(+)(out). Produces ATP from ADP in the presence of a proton gradient across the membrane. The alpha chain is a regulatory subunit. In Leifsonia xyli subsp. xyli (strain CTCB07), this protein is ATP synthase subunit alpha.